The sequence spans 120 residues: Seripauperin-24 (120 aa).

Positions 1–20 (MVKLTSIAAGVAAIAATASA) are cleaved as a signal peptide.

Belongs to the SRP1/TIP1 family. Seripauperin subfamily. Post-translationally, O-glycosylated.

The protein resides in the secreted. Its subcellular location is the cell wall. Component of the cell wall. The protein is Seripauperin-24 (PAU24) of Saccharomyces cerevisiae (strain ATCC 204508 / S288c) (Baker's yeast).